We begin with the raw amino-acid sequence, 128 residues long: Histone H2A type 1-H (128 aa).

Residues 1 to 22 (MSGRGKQGGKARAKAKTRSSRA) are disordered. N-acetylserine is present on Ser-2. Ser-2 is subject to Phosphoserine; by RPS6KA5. Arg-4 carries the post-translational modification Citrulline; alternate. At Arg-4 the chain carries Symmetric dimethylarginine; by PRMT5; alternate. At Lys-6 the chain carries N6-(2-hydroxyisobutyryl)lysine. Basic residues predominate over residues 7 to 19 (QGGKARAKAKTRS). Position 10 is an N6-(2-hydroxyisobutyryl)lysine; alternate (Lys-10). N6-(beta-hydroxybutyryl)lysine; alternate is present on residues Lys-10 and Lys-14. Lys-10 carries the N6-lactoyllysine; alternate modification. Position 10 is an N6-succinyllysine; alternate (Lys-10). A Glycyl lysine isopeptide (Lys-Gly) (interchain with G-Cter in ubiquitin); alternate cross-link involves residue Lys-14. Lys-16 participates in a covalent cross-link: Glycyl lysine isopeptide (Lys-Gly) (interchain with G-Cter in ubiquitin). Lys-37 is subject to N6-(2-hydroxyisobutyryl)lysine; alternate. An N6-(beta-hydroxybutyryl)lysine; alternate modification is found at Lys-37. Position 37 is an N6-crotonyllysine; alternate (Lys-37). Residues Lys-75 and Lys-76 each carry the N6-(2-hydroxyisobutyryl)lysine modification. The residue at position 96 (Lys-96) is an N6-(2-hydroxyisobutyryl)lysine; alternate. Lys-96 bears the N6-(beta-hydroxybutyryl)lysine; alternate mark. Lys-96 carries the N6-succinyllysine; alternate modification. The residue at position 96 (Lys-96) is an N6-glutaryllysine; alternate. An N6-glutaryllysine modification is found at Lys-100. Residue Gln-105 is modified to N5-methylglutamine. Lys-119 bears the N6-(2-hydroxyisobutyryl)lysine; alternate mark. Lys-119 carries the N6-(beta-hydroxybutyryl)lysine; alternate modification. N6-crotonyllysine; alternate occurs at positions 119 and 120. Residues Lys-119 and Lys-120 each carry the N6-glutaryllysine; alternate modification. Lys-120 is covalently cross-linked (Glycyl lysine isopeptide (Lys-Gly) (interchain with G-Cter in ubiquitin); alternate). The residue at position 121 (Thr-121) is a Phosphothreonine; by DCAF1. Lys-126 is modified (N6-crotonyllysine; alternate). Position 126 is an N6-glutaryllysine; alternate (Lys-126).

It belongs to the histone H2A family. In terms of assembly, the nucleosome is a histone octamer containing two molecules each of H2A, H2B, H3 and H4 assembled in one H3-H4 heterotetramer and two H2A-H2B heterodimers. The octamer wraps approximately 147 bp of DNA. Post-translationally, deiminated on Arg-4 in granulocytes upon calcium entry. Monoubiquitination of Lys-120 (H2AK119Ub) by RING1, TRIM37 and RNF2/RING2 complex gives a specific tag for epigenetic transcriptional repression and participates in X chromosome inactivation of female mammals. It is involved in the initiation of both imprinted and random X inactivation. Ubiquitinated H2A is enriched in inactive X chromosome chromatin. Ubiquitination of H2A functions downstream of methylation of 'Lys-27' of histone H3 (H3K27me). H2AK119Ub by RNF2/RING2 can also be induced by ultraviolet and may be involved in DNA repair. Monoubiquitination of Lys-120 (H2AK119Ub) by TRIM37 may promote transformation of cells in a number of breast cancers. Following DNA double-strand breaks (DSBs), it is ubiquitinated through 'Lys-63' linkage of ubiquitin moieties by the E2 ligase UBE2N and the E3 ligases RNF8 and RNF168, leading to the recruitment of repair proteins to sites of DNA damage. Ubiquitination at Lys-14 and Lys-16 (H2AK13Ub and H2AK15Ub, respectively) in response to DNA damage is initiated by RNF168 that mediates monoubiquitination at these 2 sites, and 'Lys-63'-linked ubiquitin are then conjugated to monoubiquitin; RNF8 is able to extend 'Lys-63'-linked ubiquitin chains in vitro. Deubiquitinated by USP51 at Lys-14 and Lys-16 (H2AK13Ub and H2AK15Ub, respectively) after damaged DNA is repaired. H2AK119Ub and ionizing radiation-induced 'Lys-63'-linked ubiquitination (H2AK13Ub and H2AK15Ub) are distinct events. In terms of processing, phosphorylation on Ser-2 (H2AS1ph) is enhanced during mitosis. Phosphorylation on Ser-2 by RPS6KA5/MSK1 directly represses transcription. Acetylation of H3 inhibits Ser-2 phosphorylation by RPS6KA5/MSK1. Phosphorylation at Thr-121 (H2AT120ph) by DCAF1 is present in the regulatory region of many tumor suppresor genes and down-regulates their transcription. Post-translationally, glutamine methylation at Gln-105 (H2AQ104me) by FBL is specifically dedicated to polymerase I. It is present at 35S ribosomal DNA locus and impairs binding of the FACT complex. Symmetric dimethylation on Arg-4 by the PRDM1/PRMT5 complex may play a crucial role in the germ-cell lineage. In terms of processing, crotonylation (Kcr) is specifically present in male germ cells and marks testis-specific genes in post-meiotic cells, including X-linked genes that escape sex chromosome inactivation in haploid cells. Crotonylation marks active promoters and enhancers and confers resistance to transcriptional repressors. It is also associated with post-meiotically activated genes on autosomes. Post-translationally, lactylated in macrophages by EP300/P300 by using lactoyl-CoA directly derived from endogenous or exogenous lactate, leading to stimulates gene transcription.

The protein localises to the nucleus. The protein resides in the chromosome. In terms of biological role, core component of nucleosome. Nucleosomes wrap and compact DNA into chromatin, limiting DNA accessibility to the cellular machineries which require DNA as a template. Histones thereby play a central role in transcription regulation, DNA repair, DNA replication and chromosomal stability. DNA accessibility is regulated via a complex set of post-translational modifications of histones, also called histone code, and nucleosome remodeling. The chain is Histone H2A type 1-H from Homo sapiens (Human).